A 158-amino-acid polypeptide reads, in one-letter code: 2-C-methyl-D-erythritol 2,4-cyclodiphosphate synthase (158 aa).

Aspartate 9 and histidine 11 together coordinate a divalent metal cation. Residues 9-11 (DVH) and 35-36 (HS) contribute to the 4-CDP-2-C-methyl-D-erythritol 2-phosphate site. Histidine 43 is a binding site for a divalent metal cation. Residues 57 to 59 (DIG), 62 to 66 (FPDTD), 101 to 107 (AQKPKMA), 133 to 136 (TTTE), phenylalanine 140, and arginine 143 each bind 4-CDP-2-C-methyl-D-erythritol 2-phosphate.

The protein belongs to the IspF family. As to quaternary structure, homotrimer. Requires a divalent metal cation as cofactor.

The enzyme catalyses 4-CDP-2-C-methyl-D-erythritol 2-phosphate = 2-C-methyl-D-erythritol 2,4-cyclic diphosphate + CMP. It functions in the pathway isoprenoid biosynthesis; isopentenyl diphosphate biosynthesis via DXP pathway; isopentenyl diphosphate from 1-deoxy-D-xylulose 5-phosphate: step 4/6. Its function is as follows. Involved in the biosynthesis of isopentenyl diphosphate (IPP) and dimethylallyl diphosphate (DMAPP), two major building blocks of isoprenoid compounds. Catalyzes the conversion of 4-diphosphocytidyl-2-C-methyl-D-erythritol 2-phosphate (CDP-ME2P) to 2-C-methyl-D-erythritol 2,4-cyclodiphosphate (ME-CPP) with a corresponding release of cytidine 5-monophosphate (CMP). This chain is 2-C-methyl-D-erythritol 2,4-cyclodiphosphate synthase, found in Bacillus pumilus (strain SAFR-032).